A 312-amino-acid polypeptide reads, in one-letter code: Urease accessory protein UreD (312 aa).

Residues 1–15 (MLAEQFTDKNKHAEQ) show a composition bias toward basic and acidic residues. The disordered stretch occupies residues 1 to 24 (MLAEQFTDKNKHAEQELSPGSSAV).

The protein belongs to the UreD family. In terms of assembly, ureD, UreF and UreG form a complex that acts as a GTP-hydrolysis-dependent molecular chaperone, activating the urease apoprotein by helping to assemble the nickel containing metallocenter of UreC. The UreE protein probably delivers the nickel.

Its subcellular location is the cytoplasm. Its function is as follows. Required for maturation of urease via the functional incorporation of the urease nickel metallocenter. The polypeptide is Urease accessory protein UreD (Hahella chejuensis (strain KCTC 2396)).